We begin with the raw amino-acid sequence, 162 residues long: Interleukin-15 (162 aa).

The first 29 residues, 1-29 (MRISKPHLRITSIQCYVCLLLNTHFLTEA), serve as a signal peptide directing secretion. Residues 30-48 (GIRVFILGCISAGIPKTEA) constitute a propeptide that is removed on maturation. Disulfide bonds link Cys-83/Cys-133 and Cys-90/Cys-136. 3 N-linked (GlcNAc...) asparagine glycosylation sites follow: Asn-119, Asn-127, and Asn-143.

Belongs to the IL-15/IL-21 family.

The protein localises to the secreted. Cytokine that plays a major role in the development of inflammatory and protective immune responses to microbial invaders and parasites by modulating immune cells of both the innate and adaptive immune systems. Stimulates the proliferation of natural killer cells, T-cells and B-cells and promotes the secretion of several cytokines. In monocytes, induces the production of IL8 and monocyte chemotactic protein 1/CCL2, two chemokines that attract neutrophils and monocytes respectively to sites of infection. Unlike most cytokines, which are secreted in soluble form, IL15 is expressed in association with its high affinity IL15RA on the surface of IL15-producing cells and delivers signals to target cells that express IL2RB and IL2RG receptor subunits. Binding to its receptor triggers the phosphorylation of JAK1 and JAK3 and the recruitment and subsequent phosphorylation of signal transducer and activator of transcription-3/STAT3 and STAT5. In mast cells, induces the rapid tyrosine phosphorylation of STAT6 and thereby controls mast cell survival and release of cytokines such as IL4. The chain is Interleukin-15 (IL15) from Marmota monax (Woodchuck).